The sequence spans 374 residues: Aminomethyltransferase (374 aa).

It belongs to the GcvT family. In terms of assembly, the glycine cleavage system is composed of four proteins: P, T, L and H.

The enzyme catalyses N(6)-[(R)-S(8)-aminomethyldihydrolipoyl]-L-lysyl-[protein] + (6S)-5,6,7,8-tetrahydrofolate = N(6)-[(R)-dihydrolipoyl]-L-lysyl-[protein] + (6R)-5,10-methylene-5,6,7,8-tetrahydrofolate + NH4(+). Functionally, the glycine cleavage system catalyzes the degradation of glycine. This chain is Aminomethyltransferase, found in Edwardsiella ictaluri (strain 93-146).